A 482-amino-acid chain; its full sequence is Uric acid transporter UacT (482 aa).

Residues methionine 1 to lysine 29 lie on the Cytoplasmic side of the membrane. A helical transmembrane segment spans residues leucine 30–leucine 50. Residues methionine 51 to alanine 62 lie on the Periplasmic side of the membrane. The chain crosses the membrane as a helical span at residues isoleucine 63–isoleucine 83. At glycine 84–arginine 92 the chain is on the cytoplasmic side. The helical transmembrane segment at leucine 93–asparagine 113 threads the bilayer. The Periplasmic portion of the chain corresponds to proline 114–aspartate 115. Residues isoleucine 116–alanine 136 traverse the membrane as a helical segment. The Cytoplasmic portion of the chain corresponds to proline 137–leucine 142. The chain crosses the membrane as a helical span at residues methionine 143 to isoleucine 163. The Periplasmic portion of the chain corresponds to glutamine 164–glutamine 178. A helical membrane pass occupies residues tyrosine 179–threonine 199. The Cytoplasmic portion of the chain corresponds to arginine 200–glycine 204. The chain crosses the membrane as a helical span at residues phenylalanine 205–methionine 225. At asparagine 226 to threonine 261 the chain is on the periplasmic side. The helical transmembrane segment at alanine 262–valine 282 threads the bilayer. Over glycine 283–serine 337 the chain is Cytoplasmic. Residues glycine 338–proline 358 form a helical membrane-spanning segment. A topological domain (periplasmic) is located at residue glutamine 359. The helical transmembrane segment at phenylalanine 360–isoleucine 380 threads the bilayer. The Cytoplasmic portion of the chain corresponds to leucine 381 to asparagine 392. Residues leucine 393–phenylalanine 413 form a helical membrane-spanning segment. The Periplasmic segment spans residues serine 414–glutamine 421. A helical transmembrane segment spans residues proline 422–phenylalanine 442. At asparagine 443–glutamate 482 the chain is on the cytoplasmic side.

Belongs to the nucleobase:cation symporter-2 (NCS2) (TC 2.A.40) family.

The protein localises to the cell inner membrane. Its activity is regulated as follows. Inhibited in the presence of the protonophore carbonyl cyanide m-chlorophenyl hydrazone. Functionally, proton-dependent high-capacity transporter for uric acid. Also shows a low capacity for transport of xanthine at 37 degrees Celsius but not at 25 degrees Celsius. This Escherichia coli (strain K12) protein is Uric acid transporter UacT (uacT).